The following is an 83-amino-acid chain: MLPLMAAISSSSLGIGTSSYSPRYTILSSLIVYTLMRKTRAPFLLSSSFFQSFSLYYKSSLLNSMLMLPLLLHIPYYVKHNKL.

This is an uncharacterized protein from Thermoproteus tenax (TTV1).